Here is a 137-residue protein sequence, read N- to C-terminus: Profilin-3 (137 aa).

The protein belongs to the profilin family. In terms of assembly, interacts with ACTRT3. In terms of tissue distribution, testis specific.

The protein localises to the cytoplasm. It localises to the cytoskeleton. It is found in the nucleus. In terms of biological role, binds to actin and affects the structure of the cytoskeleton. Slightly reduces actin polymerization. Binds to poly-L-proline, phosphatidylinositol 3-phosphate (PtdIns(3)P), phosphatidylinositol 4,5-bisphosphate (PtdIns(4,5)P2) and phosphatidylinositol 4-phosphate (PtdIns(4)P). May be involved in spermatogenesis. In Homo sapiens (Human), this protein is Profilin-3 (PFN3).